The following is a 481-amino-acid chain: Membrane-bound lytic murein transglycosylase F (481 aa).

The first 21 residues, 1–21 (MKPLKLNYFFIGIITLLLALA), serve as a signal peptide directing secretion. The segment at 22 to 268 (LWPSIPWRSS…RLEEKYLGHV (247 aa)) is non-LT domain. The LT domain stretch occupies residues 269-481 (GEFDYVDTTT…PAVPLTKVPE (213 aa)). Residue Glu-313 is part of the active site.

The protein in the N-terminal section; belongs to the bacterial solute-binding protein 3 family. In the C-terminal section; belongs to the transglycosylase Slt family.

The protein localises to the cell outer membrane. It carries out the reaction Exolytic cleavage of the (1-&gt;4)-beta-glycosidic linkage between N-acetylmuramic acid (MurNAc) and N-acetylglucosamine (GlcNAc) residues in peptidoglycan, from either the reducing or the non-reducing ends of the peptidoglycan chains, with concomitant formation of a 1,6-anhydrobond in the MurNAc residue.. Its function is as follows. Murein-degrading enzyme that degrades murein glycan strands and insoluble, high-molecular weight murein sacculi, with the concomitant formation of a 1,6-anhydromuramoyl product. Lytic transglycosylases (LTs) play an integral role in the metabolism of the peptidoglycan (PG) sacculus. Their lytic action creates space within the PG sacculus to allow for its expansion as well as for the insertion of various structures such as secretion systems and flagella. In Pectobacterium atrosepticum (strain SCRI 1043 / ATCC BAA-672) (Erwinia carotovora subsp. atroseptica), this protein is Membrane-bound lytic murein transglycosylase F.